The sequence spans 376 residues: MKILVDENMPYVEPLFGDLGDIIPVNGRTLTAEQVRDADVLLVRSVTKVNAELLSGNNKLKFVGSATIGTDHVDLAYLAERNIPFSNAPGCNATAVGEFAFIAMLELAQRFNSPLKGKVVGIVGAGNTGTATAKCLQAYGIKVLLNDPIKAAEGDPRSFVSLDTITAQADIISLHVPITRTGEHKTKHLFDEARLKALKPNTWLVNCCRGDVIDNQALIKVKRQRDDLKLVLDVWEGEPTPLPELVPLAEFATPHIAGYSLEGKARGTFMLYQKLCQLLNITADKSLLDLLPTFNIKAVELATAPNEKALLQLARFVYDLRDDDKMFRNTFLNENGFDTMRKNHQHRREFSALALAYDGQSEVDWLSNLGFSGVGQ.

Residues Ser45 and Thr67 each coordinate substrate. Asp147 is a binding site for NAD(+). Arg209 is a catalytic residue. Asp233 provides a ligand contact to NAD(+). Residue Glu238 is part of the active site. His255 serves as the catalytic Proton donor. Gly258 is a binding site for NAD(+). Residue Tyr259 coordinates substrate.

It belongs to the D-isomer specific 2-hydroxyacid dehydrogenase family. PdxB subfamily. Homodimer.

The protein resides in the cytoplasm. It catalyses the reaction 4-phospho-D-erythronate + NAD(+) = (R)-3-hydroxy-2-oxo-4-phosphooxybutanoate + NADH + H(+). The protein operates within cofactor biosynthesis; pyridoxine 5'-phosphate biosynthesis; pyridoxine 5'-phosphate from D-erythrose 4-phosphate: step 2/5. Functionally, catalyzes the oxidation of erythronate-4-phosphate to 3-hydroxy-2-oxo-4-phosphonooxybutanoate. This Shewanella baltica (strain OS185) protein is Erythronate-4-phosphate dehydrogenase.